We begin with the raw amino-acid sequence, 497 residues long: MGYKFLKLASASFRNGGVRIVSRQYSTTHDADLVVIGAGPGGYVAAIKAAQLGMKVVSVEKEPSLGGTCLNVGCIPSKALLHNTHLYHMAKHDFKHRGIETGEVKFNFKAMMDYKVNAVKALTGGIAMLFQKNKVKLVRGAGTIVAPNKVEVKGEKGVETVNTKNILIATGSEVTPFPGVTFDEKQIITSTGALSLESVPKKMLVIGAGVIGLELGSVYQRLGADVTAIEFLGSIGGIGIDMEVSKDYRILAKQGMKFKLETKVLGVKKEGSTVKVEDVSIEGAKGGNKETMDCDVVLISIGRRPYTKDLGLDKVGIALDDRGRVPVNNKFQTTVPGIYAIGDVIHGPMLAHKAEDEGIVCVEGIKGMPVHFNYDAIPSVIYTSPEVGWVRKTEEDLKKEGKAYKVRKFPFLANSRAKTNGEPDGFVKVLSDKATDVILGTHIIGPGGGELINEAVLAQEYGAAAEDVARVCHAHPTCAEALREANLAAYCGKPINF.

FAD contacts are provided by residues E60–C69, K78, G142, and T170–S172. An intrachain disulfide couples C69 to C74. Residues G207 to E214, E230, V264, and G302 contribute to the NAD(+) site. Residues D343 and M349 to H352 contribute to the FAD site. H475 (proton acceptor) is an active-site residue.

Belongs to the class-I pyridine nucleotide-disulfide oxidoreductase family. As to quaternary structure, homodimer. FAD serves as cofactor.

The protein resides in the cytoplasm. The catalysed reaction is N(6)-[(R)-dihydrolipoyl]-L-lysyl-[protein] + NAD(+) = N(6)-[(R)-lipoyl]-L-lysyl-[protein] + NADH + H(+). The protein is Dihydrolipoyl dehydrogenase of Manduca sexta (Tobacco hawkmoth).